The following is a 396-amino-acid chain: Probable sugar efflux transporter (396 aa).

12 helical membrane passes run 15 to 35 (VLIMACAGFIFNTTEFVPVAM), 51 to 71 (GLMMTVYAWTVLIMSLPAMLA), 84 to 104 (LFIIFIVGHILSVIAWNFWIL), 109 to 129 (MCIALAHSVFWSITASLVMRI), 137 to 157 (QALGMLAIGTALATILGLPIG), 168 to 188 (VTFGIIAVLALSIMFLIIRLL), 209 to 229 (PLLLWLYVTTAIVISAHFTAY), 245 to 265 (NFATAVLLVFGFSGIAASLLF), 273 to 293 (PTKFIVVSMSLLMFSLLLLLF), 297 to 317 (TIIAMFSLVFIWGIGISCIGL), 333 to 353 (VATAIYSGIFNAGIGAGALFG), and 365 to 385 (IGYTGAALGLIGFIIFITTHL).

It belongs to the major facilitator superfamily. SotB (TC 2.A.1.2) family.

Its subcellular location is the cell inner membrane. Involved in the efflux of sugars. The physiological role may be the reduction of the intracellular concentration of toxic sugars or sugar metabolites. The sequence is that of Probable sugar efflux transporter from Haemophilus influenzae (strain ATCC 51907 / DSM 11121 / KW20 / Rd).